The following is a 233-amino-acid chain: Purine nucleoside phosphorylase DeoD-type (233 aa).

Position 4 (H4) interacts with a purine D-ribonucleoside. Phosphate-binding positions include G20, R24, R43, and 87–90 (RVGT). A purine D-ribonucleoside contacts are provided by residues 178–180 (EME) and 202–203 (SD). The active-site Proton donor is the D203.

This sequence belongs to the PNP/UDP phosphorylase family. As to quaternary structure, homohexamer; trimer of homodimers.

It carries out the reaction a purine D-ribonucleoside + phosphate = a purine nucleobase + alpha-D-ribose 1-phosphate. The enzyme catalyses a purine 2'-deoxy-D-ribonucleoside + phosphate = a purine nucleobase + 2-deoxy-alpha-D-ribose 1-phosphate. Its function is as follows. Catalyzes the reversible phosphorolytic breakdown of the N-glycosidic bond in the beta-(deoxy)ribonucleoside molecules, with the formation of the corresponding free purine bases and pentose-1-phosphate. This is Purine nucleoside phosphorylase DeoD-type from Listeria innocua serovar 6a (strain ATCC BAA-680 / CLIP 11262).